We begin with the raw amino-acid sequence, 237 residues long: Eukaryotic translation initiation factor 3 subunit K (237 aa).

The region spanning 44 to 219 (CDCNANRALL…EARKAEIRED (176 aa)) is the PCI domain.

It belongs to the eIF-3 subunit K family. As to quaternary structure, component of the eukaryotic translation initiation factor 3 (eIF-3) complex.

The protein resides in the cytoplasm. Its function is as follows. Component of the eukaryotic translation initiation factor 3 (eIF-3) complex, which is involved in protein synthesis of a specialized repertoire of mRNAs and, together with other initiation factors, stimulates binding of mRNA and methionyl-tRNAi to the 40S ribosome. The eIF-3 complex specifically targets and initiates translation of a subset of mRNAs involved in cell proliferation. The polypeptide is Eukaryotic translation initiation factor 3 subunit K (Neurospora crassa (strain ATCC 24698 / 74-OR23-1A / CBS 708.71 / DSM 1257 / FGSC 987)).